A 112-amino-acid polypeptide reads, in one-letter code: Flowering-promoting factor 1-like protein 2 (112 aa).

Belongs to the FPF1 family. In terms of tissue distribution, expressed in leaves and in some parts of the flowers, mainly in the sepals.

Its function is as follows. Modulates the competence to flowering of apical meristems. The chain is Flowering-promoting factor 1-like protein 2 (FLP2) from Arabidopsis thaliana (Mouse-ear cress).